We begin with the raw amino-acid sequence, 132 residues long: Small ribosomal subunit protein uS8 (132 aa).

It belongs to the universal ribosomal protein uS8 family. In terms of assembly, part of the 30S ribosomal subunit. Contacts proteins S5 and S12.

One of the primary rRNA binding proteins, it binds directly to 16S rRNA central domain where it helps coordinate assembly of the platform of the 30S subunit. This Pediococcus pentosaceus (strain ATCC 25745 / CCUG 21536 / LMG 10740 / 183-1w) protein is Small ribosomal subunit protein uS8.